The primary structure comprises 342 residues: Protein pelota homolog (342 aa).

Belongs to the eukaryotic release factor 1 family. Pelota subfamily. In terms of assembly, monomer. The cofactor is a divalent metal cation.

It is found in the cytoplasm. Its function is as follows. May function in recognizing stalled ribosomes, interact with stem-loop structures in stalled mRNA molecules, and effect endonucleolytic cleavage of the mRNA. May play a role in the release non-functional ribosomes and degradation of damaged mRNAs. Has endoribonuclease activity. The polypeptide is Protein pelota homolog (Methanocorpusculum labreanum (strain ATCC 43576 / DSM 4855 / Z)).